We begin with the raw amino-acid sequence, 364 residues long: Ferrochelatase (364 aa).

Fe cation is bound by residues histidine 213 and glutamate 294.

This sequence belongs to the ferrochelatase family.

The protein localises to the cytoplasm. The enzyme catalyses heme b + 2 H(+) = protoporphyrin IX + Fe(2+). The protein operates within porphyrin-containing compound metabolism; protoheme biosynthesis; protoheme from protoporphyrin-IX: step 1/1. Its function is as follows. Catalyzes the ferrous insertion into protoporphyrin IX. In Chromobacterium violaceum (strain ATCC 12472 / DSM 30191 / JCM 1249 / CCUG 213 / NBRC 12614 / NCIMB 9131 / NCTC 9757 / MK), this protein is Ferrochelatase.